A 569-amino-acid chain; its full sequence is Phospholipase B-like protein D (569 aa).

The signal sequence occupies residues 1–22; sequence MIIFKNLLKLLIILLTIKLYFC. Residues Asn-93, Asn-126, Asn-181, Asn-425, and Asn-430 are each glycosylated (N-linked (GlcNAc...) asparagine).

It belongs to the phospholipase B-like family.

It is found in the secreted. In terms of biological role, probable phospholipase. The protein is Phospholipase B-like protein D (plbD) of Dictyostelium discoideum (Social amoeba).